We begin with the raw amino-acid sequence, 185 residues long: MLNIVLIIGLLAIFNTSSASNDVCHVTRKPLMLPAPGDVYKKAVQFYSNITAPRSTSVLAPVMSSLEVYINTTTTSAFAPAQSIKVADILEEDADAIRVKSIRMAGFIAQCIIFLFVYTIVTMDVEIWKINMDWLKIQYFQHFEDSAAEVPVFKLYMAREIQTCPLPARQNVMIVRQFMEMESNC.

2 helical membrane-spanning segments follow: residues 1–19 (MLNIVLIIGLLAIFNTSSA) and 105–125 (AGFIAQCIIFLFVYTIVTMDV).

It is found in the membrane. This is an uncharacterized protein from Caenorhabditis elegans.